The following is a 421-amino-acid chain: MGDWSKLPEELLGLIALRLYSVIELIRFRSICKSWRSSASGVNKNHSLSSPLIYFKPLQIILARAQANGQILSKYHGTVLSRATFFRVTLASSPDQGWLIKSDTDLKYRNFHLLNCLSRKALGRSRKLISLSEFIVSEIQESYAVVGRRTRETASEFKRVFLVRVQGGDHRVLVIGIDGKIRFWKGGIWNGIKKQVAQFSDFVLDEGLTYAVDTKGIMWWISSAYDIIRYGTKLHENITNGSCGEKRFVRCRGELYIVDRLIDENLLKRKADSYDDNAIVHFRNADYTNADLWEDGNGNDDFFAAQAHRFIHVLHDNLGNVSCKPFERDPPKTIGFKVYKNDEELLKWVEVKSLGDKAIVIATDACFSVSAHEFYGCLPNSIYFTDKKEEEVKVFKLDDGSITTMSESEQSCFQMFVPSFL.

The F-box domain maps to 2 to 50 (GDWSKLPEELLGLIALRLYSVIELIRFRSICKSWRSSASGVNKNHSLSS).

In terms of biological role, involved in heat stress response. Contributes to recovery from heat stress. The chain is F-box protein At2g17690 from Arabidopsis thaliana (Mouse-ear cress).